The chain runs to 111 residues: Ferredoxin, 2Fe-2S (111 aa).

[2Fe-2S] cluster is bound by residues Cys10, Cys23, Cys56, and Cys60.

Homodimer in solution. [2Fe-2S] cluster serves as cofactor.

Functionally, ferredoxins are iron-sulfur proteins that transfer electrons in a wide variety of metabolic reactions. The protein is Ferredoxin, 2Fe-2S (fdx4) of Aquifex aeolicus (strain VF5).